We begin with the raw amino-acid sequence, 71 residues long: uncharacterized protein (71 aa).

The chain crosses the membrane as a helical span at residues F12 to L32.

It is found in the membrane. This is an uncharacterized protein from Sinorhizobium fredii (strain NBRC 101917 / NGR234).